A 232-amino-acid polypeptide reads, in one-letter code: Expansin-YoaJ (232 aa).

Residues 1–25 (MKKIMSAFVGMVLLTIFCFSPQASA) form the signal peptide. The Expansin-like EG45 domain maps to 58 to 127 (ITAINPADLN…MKDGKINIKW (70 aa)).

The protein localises to the secreted. The protein resides in the cell wall. In terms of biological role, may promote colonization of plant roots. May cause loosening and extension of plant cell walls by disrupting non-covalent bonding between cellulose microfibrils and matrix glucans. Has very low expansin activity (in vitro). No enzymatic activity has been found. Binds to peptidoglycan and to plant cell walls. The polypeptide is Expansin-YoaJ (yoaJ) (Bacillus subtilis (strain 168)).